The chain runs to 349 residues: MSGWSHRHVLDLASFSRDDYATVLELAHRFRSMPVTGARKLPALQGRLVATLFFEPSTRTRSSFELAAKRLSADVQSFSPSSSSLSKGESLLDTARTYVAMGADVLVIRHRCTDVPAQLASELDQAGERTVVLNGGDGQHSHPSQGLLDLYTLAHHFDPRNSQLDALQGKRIVIVGDVVHSRVARSNLWALSACGADVVLCGPPSLVPDAFAAFLDAPPPGQASDPVRERGTVQISRSLDDCLSGADAVMTLRLQKERMTDHLLTNLDRYHRDFGLTHERLRRCAFSGPVLHPGPVNRGVEMSGGLLDDRSICLVEDQVRNGIPIRMALLYLMAASDPVAESSRASAPS.

2 residues coordinate carbamoyl phosphate: arginine 59 and threonine 60. L-aspartate is bound at residue lysine 87. 3 residues coordinate carbamoyl phosphate: arginine 109, histidine 142, and glutamine 145. 2 residues coordinate L-aspartate: arginine 182 and arginine 253. Glycine 294 and proline 295 together coordinate carbamoyl phosphate.

Belongs to the aspartate/ornithine carbamoyltransferase superfamily. ATCase family. Heterododecamer (2C3:3R2) of six catalytic PyrB chains organized as two trimers (C3), and six regulatory PyrI chains organized as three dimers (R2).

It carries out the reaction carbamoyl phosphate + L-aspartate = N-carbamoyl-L-aspartate + phosphate + H(+). It participates in pyrimidine metabolism; UMP biosynthesis via de novo pathway; (S)-dihydroorotate from bicarbonate: step 2/3. Functionally, catalyzes the condensation of carbamoyl phosphate and aspartate to form carbamoyl aspartate and inorganic phosphate, the committed step in the de novo pyrimidine nucleotide biosynthesis pathway. The chain is Aspartate carbamoyltransferase catalytic subunit from Synechococcus sp. (strain CC9311).